The chain runs to 287 residues: tRNA selenocysteine 1-associated protein 1 (287 aa).

RRM domains are found at residues 3 to 86 (ASLW…YATY) and 96 to 175 (YSLF…VAIP).

Belongs to the RRM TRSPAP family. In terms of assembly, component of the tRNA(Sec) complex composed at least of EEFSEC, SECISBP2, SEPHS1, SEPSECS, TRNAU1AP and tRNA(Sec). Found in a complex with tRNA(Sec). Interacts with SEPSECS. Associates with mRNP and/or polysomes. Found in a complex with EEFSEC, SECISBP2, TRNAU1AP and tRNA(Sec).

It localises to the nucleus. Its subcellular location is the cytoplasm. Its function is as follows. Involved in the early steps of selenocysteine biosynthesis and tRNA(Sec) charging to the later steps resulting in the cotranslational incorporation of selenocysteine into selenoproteins. Stabilizes the SECISBP2, EEFSEC and tRNA(Sec) complex. May be involved in the methylation of tRNA(Sec). Enhances efficiency of selenoproteins synthesis. The chain is tRNA selenocysteine 1-associated protein 1 (TRNAU1AP) from Bos taurus (Bovine).